The primary structure comprises 348 residues: D-alanine--D-alanine ligase (348 aa).

The ATP-grasp domain maps to 132 to 334 (KRILEVAGVP…YSDLIKELVV (203 aa)). 162 to 217 (LEKLTFPVFVKPANMGSSVGISKAENESELRSAIDLALKYDSRILIEQGVVAREIE) lines the ATP pocket. Aspartate 288, glutamate 301, and asparagine 303 together coordinate Mg(2+).

This sequence belongs to the D-alanine--D-alanine ligase family. It depends on Mg(2+) as a cofactor. Mn(2+) is required as a cofactor.

The protein localises to the cytoplasm. It carries out the reaction 2 D-alanine + ATP = D-alanyl-D-alanine + ADP + phosphate + H(+). It functions in the pathway cell wall biogenesis; peptidoglycan biosynthesis. In terms of biological role, cell wall formation. This chain is D-alanine--D-alanine ligase, found in Streptococcus thermophilus (strain ATCC BAA-491 / LMD-9).